The sequence spans 320 residues: Mitochondrial thiamine pyrophosphate carrier 1 (320 aa).

Solcar repeat units follow at residues 12-110 (GTRR…TTQA), 119-205 (PQPV…LRPS), and 213-308 (PFGS…TLRA). The next 6 membrane-spanning stretches (helical) occupy residues 17–35 (VVLA…VAPL), 91–107 (LMYV…YRTT), 125–145 (FVAG…LDLL), 180–197 (GCSA…LFFA), 219–239 (ALAG…LDLV), and 283–300 (GLTV…VTMW).

It belongs to the mitochondrial carrier (TC 2.A.29) family.

The protein localises to the mitochondrion inner membrane. Mitochondrial transporter that mediates uptake of thiamine pyrophosphate (ThPP) into mitochondria. The chain is Mitochondrial thiamine pyrophosphate carrier 1 (tpc1) from Aspergillus terreus (strain NIH 2624 / FGSC A1156).